The sequence spans 114 residues: MGCRLLCCVVFCLLQAGPLDTAVSQTPKYLVTQMGNDKSIKCEQNLGHDTMYWYKQDSKKFLKIMFSYNNKELIINETVPNRFSPKSPDKAHLNLHINSLELGDSAVYFCASSQ.

The N-terminal stretch at 1 to 21 (MGCRLLCCVVFCLLQAGPLDT) is a signal peptide. The 93-residue stretch at 22–114 (AVSQTPKYLV…SAVYFCASSQ (93 aa)) folds into the Ig-like domain. Cysteines 42 and 110 form a disulfide. N-linked (GlcNAc...) asparagine glycosylation occurs at asparagine 76.

As to quaternary structure, alpha-beta TR is a heterodimer composed of an alpha and beta chain; disulfide-linked. The alpha-beta TR is associated with the transmembrane signaling CD3 coreceptor proteins to form the TR-CD3 (TcR or TCR). The assembly of alpha-beta TR heterodimers with CD3 occurs in the endoplasmic reticulum where a single alpha-beta TR heterodimer associates with one CD3D-CD3E heterodimer, one CD3G-CD3E heterodimer and one CD247 homodimer forming a stable octameric structure. CD3D-CD3E and CD3G-CD3E heterodimers preferentially associate with TR alpha and TR beta chains, respectively. The association of the CD247 homodimer is the last step of TcR assembly in the endoplasmic reticulum and is required for transport to the cell surface.

Its subcellular location is the cell membrane. Its function is as follows. V region of the variable domain of T cell receptor (TR) beta chain that participates in the antigen recognition. Alpha-beta T cell receptors are antigen specific receptors which are essential to the immune response and are present on the cell surface of T lymphocytes. Recognize peptide-major histocompatibility (MH) (pMH) complexes that are displayed by antigen presenting cells (APC), a prerequisite for efficient T cell adaptive immunity against pathogens. Binding of alpha-beta TR to pMH complex initiates TR-CD3 clustering on the cell surface and intracellular activation of LCK that phosphorylates the ITAM motifs of CD3G, CD3D, CD3E and CD247 enabling the recruitment of ZAP70. In turn ZAP70 phosphorylates LAT, which recruits numerous signaling molecules to form the LAT signalosome. The LAT signalosome propagates signal branching to three major signaling pathways, the calcium, the mitogen-activated protein kinase (MAPK) kinase and the nuclear factor NF-kappa-B (NF-kB) pathways, leading to the mobilization of transcription factors that are critical for gene expression and essential for T cell growth and differentiation. The T cell repertoire is generated in the thymus, by V-(D)-J rearrangement. This repertoire is then shaped by intrathymic selection events to generate a peripheral T cell pool of self-MH restricted, non-autoaggressive T cells. Post-thymic interaction of alpha-beta TR with the pMH complexes shapes TR structural and functional avidity. This chain is T cell receptor beta variable 3-1, found in Homo sapiens (Human).